A 570-amino-acid chain; its full sequence is D-xylulose kinase A (570 aa).

Positions 95, 166, 282, and 283 each coordinate substrate. ATP-binding positions include W364, 469 to 470, and N473; that span reads GG.

It belongs to the FGGY kinase family.

The protein localises to the cytoplasm. It carries out the reaction D-xylulose + ATP = D-xylulose 5-phosphate + ADP + H(+). Highly specific D-xylulose kinase which participates in the catabolism of xylose. Xylose is a major component of hemicelluloses such as xylan. Most fungi utilize D-xylose via three enzymatic reactions, xylose reductase (XR), xylitol dehydrogenase (XDH), and xylulokinase, to form xylulose 5-phosphate, which enters pentose phosphate pathway. This is D-xylulose kinase A (xkiA) from Aspergillus niger.